The chain runs to 230 residues: MKQIIAMGGGGFSMEPDNLSLDQYILNQSKREQPRICFLPTASGDSQNYIQRFYHAFQTLDCVPSHLSLFKPPSSDLVSFVMEMDVIYVGGGNTRNLLVLWKEWGLDHILREAWKNGVVVAGISAGAICWFEEGVTDSAGPLTSLKSLGFLQGSFCPHYDGEKDRRPAYHQLISNKFLCSGYAADDGAALHFINDQLFQTVSSRSGAKAYRVMMAEHEIAEIPLPVKYLG.

Catalysis depends on charge relay system residues Ser124 and His158.

It belongs to the peptidase S51 family.

This is an uncharacterized protein from Bacillus subtilis (strain 168).